A 168-amino-acid polypeptide reads, in one-letter code: Transcription antitermination protein NusB (168 aa).

The protein belongs to the NusB family.

Involved in transcription antitermination. Required for transcription of ribosomal RNA (rRNA) genes. Binds specifically to the boxA antiterminator sequence of the ribosomal RNA (rrn) operons. The sequence is that of Transcription antitermination protein NusB from Deinococcus deserti (strain DSM 17065 / CIP 109153 / LMG 22923 / VCD115).